The sequence spans 914 residues: Neuropilin-1 (914 aa).

The signal sequence occupies residues 1 to 18; sequence MDWGLFLHCAALTFTLSR. Residues 20–847 lie on the Extracellular side of the membrane; it reads LRSDKCGDTI…PGNVLKTLDP (828 aa). Intrachain disulfides connect Cys25/Cys52, Cys80/Cys102, and Cys145/Cys171. CUB domains lie at 25–139 and 145–263; these read CGDT…YEVF and CSRN…YSVS. N-linked (GlcNAc...) asparagine glycosylation is present at Asn148. Ca(2+) is bound by residues Glu193, Asp207, and Asp248. Cys204 and Cys226 are joined by a disulfide. Asn259 is a glycosylation site (N-linked (GlcNAc...) asparagine). Intrachain disulfides connect Cys273–Cys422 and Cys429–Cys581. F5/8 type C domains lie at 273 to 422 and 429 to 581; these read CMEP…VYGC and CSGM…LLGC. Asn520 carries N-linked (GlcNAc...) asparagine glycosylation. Ser610 is a glycosylation site (O-linked (Xyl...) (chondroitin sulfate) serine; alternate). A glycan (O-linked (Xyl...) (heparan sulfate) serine; alternate) is linked at Ser610. One can recognise an MAM domain in the interval 636–801; it reads PYNLNCGFGW…NHISQEDCQK (166 aa). The tract at residues 809 to 829 is disordered; sequence IVEEDPESNQTGFTPSYRTDE. A compositionally biased stretch (polar residues) spans 816–825; that stretch reads SNQTGFTPSY. The N-linked (GlcNAc...) asparagine glycan is linked to Asn817. A helical membrane pass occupies residues 848–870; it reads ILITIIAMSALGVLLGAICGVVL. Over 871–914 the chain is Cytoplasmic; it reads YCACWHNGMSERNLSALENYNFELVDGVKLKKDKLNTQNSYSEA.

The protein belongs to the neuropilin family. In terms of assembly, homodimer, and heterodimer. Developing nervous system; optic tectum (layers D and E of SGFS), amacrine cells of retina, neurites of dorsal root ganglia. Also expressed in non-neuronal cells, e.g. blood vessels in the entire embryo.

It is found in the mitochondrion membrane. The protein localises to the cell membrane. Functionally, receptor involved in the development of the cardiovascular system, in angiogenesis, in the formation of certain neuronal circuits and in organogenesis outside the nervous system. Mediates the chemorepulsant activity of semaphorins. Binding to VEGFA initiates a signaling pathway needed for motor neuron axon guidance and cell body migration, including for the caudal migration of facial motor neurons from rhombomere 4 to rhombomere 6 during embryonic development. Regulates mitochondrial iron transport via interaction. The polypeptide is Neuropilin-1 (NRP1) (Gallus gallus (Chicken)).